The sequence spans 128 residues: Small ribosomal subunit protein uS9c (128 aa).

The interval 106–128 (SRIKERKKYGLKKARKAPQFSKR) is disordered. Basic residues predominate over residues 109-128 (KERKKYGLKKARKAPQFSKR).

The protein belongs to the universal ribosomal protein uS9 family.

Its subcellular location is the plastid. It localises to the chloroplast. This chain is Small ribosomal subunit protein uS9c (rps9), found in Cyanidium caldarium (Red alga).